The sequence spans 823 residues: Endoplasmin homolog (823 aa).

An N-terminal signal peptide occupies residues Met-1 to Gly-23. A disordered region spans residues Asn-29 to Val-60. A compositionally biased stretch (basic and acidic residues) spans Asp-39–Gly-48. ATP-binding positions include Glu-106, Asn-110, Asp-154, Met-159, Asn-167, Lys-173, Ser-174–Gly-175, Gln-194–Phe-199, Phe-199, and Thr-246. An N-linked (GlcNAc...) asparagine glycan is attached at Asn-110. The interval Glu-289–Thr-328 is disordered. Residues Thr-290–Asp-321 show a composition bias toward acidic residues. Asn-452 and Asn-620 each carry an N-linked (GlcNAc...) asparagine glycan. The span at Val-777 to Glu-792 shows a compositional bias: acidic residues. The tract at residues Val-777–Leu-823 is disordered. The Prevents secretion from ER signature appears at Lys-820–Leu-823.

The protein belongs to the heat shock protein 90 family. In terms of assembly, interacts with FKBP42. Interacts with P23-1. In terms of tissue distribution, ubiquitous.

The protein resides in the endoplasmic reticulum lumen. In terms of biological role, may have a molecular chaperone role in the processing of secreted materials. Required for shoot apical meristem (SAM), root apical meristem (RAM) and floral meristem (FM) formation, probably by regulating the folding of CLAVATA proteins (CLVs). Also involved in pollen tube elongation. Involved in resistance to tunicamycin- or high calcium-induced ER stresses. Possesses ATPase activity. The chain is Endoplasmin homolog from Arabidopsis thaliana (Mouse-ear cress).